A 92-amino-acid polypeptide reads, in one-letter code: Signal recognition particle 19 kDa protein (92 aa).

The protein belongs to the SRP19 family. As to quaternary structure, part of the signal recognition particle protein translocation system, which is composed of SRP and FtsY. Archaeal SRP consists of a 7S RNA molecule of 300 nucleotides and two protein subunits: SRP54 and SRP19.

Its subcellular location is the cytoplasm. Involved in targeting and insertion of nascent membrane proteins into the cytoplasmic membrane. Binds directly to 7S RNA and mediates binding of the 54 kDa subunit of the SRP. The polypeptide is Signal recognition particle 19 kDa protein (Haloarcula marismortui (strain ATCC 43049 / DSM 3752 / JCM 8966 / VKM B-1809) (Halobacterium marismortui)).